Reading from the N-terminus, the 679-residue chain is Oxidant-induced cell-cycle arrest protein 5 (679 aa).

In terms of domain architecture, Rab-GAP TBC spans 50–441 (GVPPQLRHVV…RVWDLLLGWR (392 aa)). The segment covering 135–153 (NPAGSSSNANTTNIATPTP) has biased composition (low complexity). Disordered stretches follow at residues 135-159 (NPAGSSSNANTTNIATPTPVSSSDA), 250-271 (TNNGNNGNSNSSSNNTNNNNTN), and 524-544 (QSKAQKDNTVPSPGSDSNDKS). Residues 524–539 (QSKAQKDNTVPSPGSD) show a composition bias toward polar residues.

This sequence belongs to the OCA5 family.

It is found in the cytoplasm. Required for replication of brome mosaic virus (BMV), a positive-strand RNA virus. This Saccharomyces cerevisiae (strain RM11-1a) (Baker's yeast) protein is Oxidant-induced cell-cycle arrest protein 5 (OCA5).